The following is a 449-amino-acid chain: Argininosuccinate synthase (449 aa).

ATP contacts are provided by residues 17-25 and A43; that span reads AFSGGLDTS. Y99 is a binding site for L-citrulline. G129 and T131 together coordinate ATP. 3 residues coordinate L-aspartate: T131, N135, and D136. N135 is a binding site for L-citrulline. D136 lines the ATP pocket. R139 and S192 together coordinate L-citrulline. D194 serves as a coordination point for ATP. The L-citrulline site is built by T201, E203, and E280.

This sequence belongs to the argininosuccinate synthase family. Type 2 subfamily. As to quaternary structure, homotetramer.

The protein resides in the cytoplasm. The enzyme catalyses L-citrulline + L-aspartate + ATP = 2-(N(omega)-L-arginino)succinate + AMP + diphosphate + H(+). Its pathway is amino-acid biosynthesis; L-arginine biosynthesis; L-arginine from L-ornithine and carbamoyl phosphate: step 2/3. The polypeptide is Argininosuccinate synthase (Dickeya dadantii (strain 3937) (Erwinia chrysanthemi (strain 3937))).